Consider the following 589-residue polypeptide: Probable methyltransferase PMT23 (589 aa).

Over 1 to 4 (MAIS) the chain is Cytoplasmic. Residues 5-25 (VQHVVVLLLSTLLIAITFFLF) traverse the membrane as a helical; Signal-anchor for type II membrane protein segment. Residues 26–589 (TSDNARFPFP…FWRPAKPELR (564 aa)) lie on the Lumenal side of the membrane. N-linked (GlcNAc...) asparagine glycans are attached at residues N70, N375, and N442.

It belongs to the methyltransferase superfamily.

The protein localises to the golgi apparatus membrane. The sequence is that of Probable methyltransferase PMT23 from Arabidopsis thaliana (Mouse-ear cress).